Here is a 301-residue protein sequence, read N- to C-terminus: GTPase Era (301 aa).

An Era-type G domain is found at 7–175; sequence YCGFVAIVGR…AAIVRKHLPE (169 aa). The interval 15 to 22 is G1; the sequence is GRPNVGKS. 15 to 22 lines the GTP pocket; the sequence is GRPNVGKS. Residues 41–45 are G2; sequence QTTRH. The G3 stretch occupies residues 62 to 65; it reads DTPG. Residues 62–66 and 124–127 contribute to the GTP site; these read DTPGL and NKVD. Positions 124 to 127 are G4; sequence NKVD. Residues 154 to 156 form a G5 region; the sequence is ISA. Residues 206 to 283 enclose the KH type-2 domain; sequence LGAELPYSVT…HLELWVKVKS (78 aa).

Belongs to the TRAFAC class TrmE-Era-EngA-EngB-Septin-like GTPase superfamily. Era GTPase family. In terms of assembly, monomer.

It is found in the cytoplasm. Its subcellular location is the cell inner membrane. In terms of biological role, an essential GTPase that binds both GDP and GTP, with rapid nucleotide exchange. Plays a role in 16S rRNA processing and 30S ribosomal subunit biogenesis and possibly also in cell cycle regulation and energy metabolism. The sequence is that of GTPase Era from Klebsiella pneumoniae subsp. pneumoniae (strain ATCC 700721 / MGH 78578).